The primary structure comprises 131 residues: Profilin-1 (131 aa).

The protein belongs to the profilin family. In terms of assembly, occurs in many kinds of cells as a complex with monomeric actin in a 1:1 ratio.

The protein resides in the cytoplasm. The protein localises to the cytoskeleton. Binds to actin and affects the structure of the cytoskeleton. At high concentrations, profilin prevents the polymerization of actin, whereas it enhances it at low concentrations. By binding to PIP2, it inhibits the formation of IP3 and DG. This Lilium longiflorum (Trumpet lily) protein is Profilin-1.